The following is a 558-amino-acid chain: Membrane protein insertase YidC (558 aa).

Helical transmembrane passes span 5 to 25, 332 to 352, 355 to 375, 429 to 449, 474 to 494, and 520 to 540; these read IINL…WQYF, AIDF…MNFF, YVGN…LLMF, LPIL…YVTI, LFGL…WPIL, and FMPL…LIYW.

The protein belongs to the OXA1/ALB3/YidC family. Type 1 subfamily. Interacts with the Sec translocase complex via SecD. Specifically interacts with transmembrane segments of nascent integral membrane proteins during membrane integration.

It localises to the cell inner membrane. Functionally, required for the insertion and/or proper folding and/or complex formation of integral membrane proteins into the membrane. Involved in integration of membrane proteins that insert both dependently and independently of the Sec translocase complex, as well as at least some lipoproteins. Aids folding of multispanning membrane proteins. This is Membrane protein insertase YidC from Rickettsia typhi (strain ATCC VR-144 / Wilmington).